A 590-amino-acid polypeptide reads, in one-letter code: MEKLSMVTSLLCAITVAVLAVAVVSGEAAVVEHTFVVHEMNATHLCNTTKIYVVNGQFPGPTVDVTEGDTVVVHVINKLPFGLTIHWHGVRQMRSCWADGAGFVTECPIPPGNEHTYRFNVTGQVGTLWWHAHVTCLRATINGAFIVRPRDGKYPFPTPAKDVPIIIGEWWELDLIELDRRMMDGNFDDNPLSATINGKLGDLSNCSRMVEESFILDVKHGESYLLRVINTALFSEYYFRVAGHTFTVVGADGNYLTPFKTDMVTVAPGEAIDVIMVADAPPAHYHMIALANQPPEPDPQIPVFTSRGLVRYAGTTANNNGLPVPMPIMPNQHNTMPSYYFHANLTGLAHPERHRVPMHVDERLFVTLGLGSICRGQNTTCKRRRSPETIVVATMNNVSFAHPKTTALLERYYDGTSKGVYTEDFPIRPPRPFNYTNRDLIPPGPLEEALEPTFKATKLKRFKYNTSVEIIFQSTTLMQSDSNPMHLHGYDVFLLAQGLGNFNAKRDVRKFNYHNPQLRNTVQVPRGGWAAIRFVTDNPGMWYLHCHFEFHIIMGMATAFIVEDGPTPETSLPPPPPEFKRCGNNGLSQP.

The N-terminal stretch at 1-28 (MEKLSMVTSLLCAITVAVLAVAVVSGEA) is a signal peptide. Plastocyanin-like domains follow at residues 36–152 (VVHE…PRDG) and 161–315 (KDVP…YAGT). N-linked (GlcNAc...) asparagine glycans are attached at residues Asn-41 and Asn-47. Residues His-86 and His-88 each coordinate Cu cation. An N-linked (GlcNAc...) asparagine glycan is attached at Asn-120. Cu cation is bound by residues His-131 and His-133. Asn-205, Asn-344, Asn-378, Asn-397, Asn-434, and Asn-465 each carry an N-linked (GlcNAc...) asparagine glycan. The Plastocyanin-like 3 domain occupies 424–566 (DFPIRPPRPF…ATAFIVEDGP (143 aa)). Cu cation contacts are provided by Asn-483, His-486, His-488, His-545, Cys-546, His-547, His-551, and Met-556. Residues 565 to 590 (GPTPETSLPPPPPEFKRCGNNGLSQP) form a disordered region.

It belongs to the multicopper oxidase family. The cofactor is Cu cation.

It is found in the secreted. It localises to the extracellular space. The protein localises to the apoplast. It catalyses the reaction 4 hydroquinone + O2 = 4 benzosemiquinone + 2 H2O. In terms of biological role, lignin degradation and detoxification of lignin-derived products. The sequence is that of Laccase-19 (LAC19) from Oryza sativa subsp. japonica (Rice).